The chain runs to 430 residues: MKQALRVAFGFLILWASVLHAEVRIVIDSGVDSGRPIGVVPFQWVGPGAAPEDIGGIVAADLRNSGKFNPLDRARLPQQPGSAQEVQPAAWSALGIDAVVVGQVTPNPDGSYNVAYQLVDTGGAPGTVLAQNSYKVNKQWLRYAGHTASDEVFEKLTGIKGAFRTRIAYVVQTNGGQFPYELRVSDYDGYNQFVVHRSPQPLMSPAWSPDGSKLAYVTFESGRSALVIQTLANGAVRQVASFPRHNGAPAFSPDGSKLAFALSKTGSLNLYVMDLASGQIRQVTDGRSNNTEPTWFPDSQNLAFTSDQAGRPQVYKVNINGGAPQRITWEGSQNQDADVSSDGKFMVMVSSNGGQQHIAKQDLATGGVQVLSSTFLDETPSLAPNGTMVIYSSSQGMGSVLNLVSTDGRFKARLPATDGQVKFPAWSPYL.

An N-terminal signal peptide occupies residues 1-21 (MKQALRVAFGFLILWASVLHA).

Belongs to the TolB family. In terms of assembly, the Tol-Pal system is composed of five core proteins: the inner membrane proteins TolA, TolQ and TolR, the periplasmic protein TolB and the outer membrane protein Pal. They form a network linking the inner and outer membranes and the peptidoglycan layer.

The protein resides in the periplasm. In terms of biological role, part of the Tol-Pal system, which plays a role in outer membrane invagination during cell division and is important for maintaining outer membrane integrity. TolB occupies a key intermediary position in the Tol-Pal system because it communicates directly with both membrane-embedded components, Pal in the outer membrane and TolA in the inner membrane. The sequence is that of Tol-Pal system protein TolB from Escherichia coli O8 (strain IAI1).